The chain runs to 398 residues: Phytoene synthase 2, chloroplastic (398 aa).

Residues 1–80 (MASSSSAAAL…EEAVYEVVLR (80 aa)) constitute a chloroplast transit peptide.

This sequence belongs to the phytoene/squalene synthase family. As to expression, expressed in leaves and endosperm. Expressed in developing leaves.

The protein resides in the plastid. It is found in the chloroplast membrane. It localises to the chloroplast. The protein localises to the plastoglobule. The enzyme catalyses 2 (2E,6E,10E)-geranylgeranyl diphosphate = 15-cis-phytoene + 2 diphosphate. In terms of biological role, catalyzes the conversion of geranylgeranyl diphosphate to phytoene. Mediates the first committed step in carotenoid biosynthesis. The chain is Phytoene synthase 2, chloroplastic from Oryza sativa subsp. japonica (Rice).